Here is a 314-residue protein sequence, read N- to C-terminus: DNA-directed RNA polymerase subunit alpha (314 aa).

The interval 1–227 (MIEFQKPTIS…EHLALFIDLS (227 aa)) is alpha N-terminal domain (alpha-NTD). The segment at 241-314 (VETVMENKEP…GQSFKQETEN (74 aa)) is alpha C-terminal domain (alpha-CTD).

Belongs to the RNA polymerase alpha chain family. As to quaternary structure, homodimer. The RNAP catalytic core consists of 2 alpha, 1 beta, 1 beta' and 1 omega subunit. When a sigma factor is associated with the core the holoenzyme is formed, which can initiate transcription.

The enzyme catalyses RNA(n) + a ribonucleoside 5'-triphosphate = RNA(n+1) + diphosphate. Functionally, DNA-dependent RNA polymerase catalyzes the transcription of DNA into RNA using the four ribonucleoside triphosphates as substrates. This chain is DNA-directed RNA polymerase subunit alpha, found in Oenococcus oeni (strain ATCC BAA-331 / PSU-1).